The sequence spans 357 residues: RNA 3'-terminal phosphate cyclase (357 aa).

ATP is bound by residues Q102 and 293 to 296 (HMGD). The Tele-AMP-histidine intermediate role is filled by H319.

The protein belongs to the RNA 3'-terminal cyclase family. Type 1 subfamily.

Its subcellular location is the cytoplasm. It catalyses the reaction a 3'-end 3'-phospho-ribonucleotide-RNA + ATP = a 3'-end 2',3'-cyclophospho-ribonucleotide-RNA + AMP + diphosphate. Its function is as follows. Catalyzes the conversion of 3'-phosphate to a 2',3'-cyclic phosphodiester at the end of RNA. The mechanism of action of the enzyme occurs in 3 steps: (A) adenylation of the enzyme by ATP; (B) transfer of adenylate to an RNA-N3'P to produce RNA-N3'PP5'A; (C) and attack of the adjacent 2'-hydroxyl on the 3'-phosphorus in the diester linkage to produce the cyclic end product. The biological role of this enzyme is unknown but it is likely to function in some aspects of cellular RNA processing. In Staphylothermus marinus (strain ATCC 43588 / DSM 3639 / JCM 9404 / F1), this protein is RNA 3'-terminal phosphate cyclase.